A 273-amino-acid polypeptide reads, in one-letter code: 4-hydroxy-tetrahydrodipicolinate reductase (273 aa).

NAD(+) is bound by residues 12 to 17 and glutamate 38; that span reads GAGGRM. NADP(+) is bound at residue arginine 39. NAD(+) contacts are provided by residues 102–104 and 126–129; these read GTT and AANF. The active-site Proton donor/acceptor is histidine 159. Histidine 160 is a binding site for (S)-2,3,4,5-tetrahydrodipicolinate. Lysine 163 functions as the Proton donor in the catalytic mechanism. (S)-2,3,4,5-tetrahydrodipicolinate is bound at residue 169 to 170; it reads GT.

Belongs to the DapB family. Homotetramer.

The protein resides in the cytoplasm. It catalyses the reaction (S)-2,3,4,5-tetrahydrodipicolinate + NAD(+) + H2O = (2S,4S)-4-hydroxy-2,3,4,5-tetrahydrodipicolinate + NADH + H(+). The catalysed reaction is (S)-2,3,4,5-tetrahydrodipicolinate + NADP(+) + H2O = (2S,4S)-4-hydroxy-2,3,4,5-tetrahydrodipicolinate + NADPH + H(+). It participates in amino-acid biosynthesis; L-lysine biosynthesis via DAP pathway; (S)-tetrahydrodipicolinate from L-aspartate: step 4/4. Functionally, catalyzes the conversion of 4-hydroxy-tetrahydrodipicolinate (HTPA) to tetrahydrodipicolinate. The chain is 4-hydroxy-tetrahydrodipicolinate reductase from Salmonella choleraesuis (strain SC-B67).